Consider the following 370-residue polypeptide: Transcription factor E2F2 (370 aa).

Residues 1-73 form a disordered region; the sequence is MYKRKTASIV…QSQSQPGQQR (73 aa). The segment covering 15-26 has biased composition (low complexity); sequence SAAGTTSSAMMM. Polar residues predominate over residues 31 to 49; it reads AETSVRSQSYESTPVSMDT. Over residues 59 to 73 the composition is skewed to low complexity; the sequence is SPSNSQSQSQPGQQR. A DNA-binding region spans residues 72-137; that stretch reads QRSVGSLVLL…GRHCSLVRWR (66 aa). Residues 137–226 form a dimerization region; the sequence is RGGGFNNAKD…VDIKRNHYEL (90 aa).

The protein belongs to the E2F/DP family. In terms of assembly, forms a heterodimer with Dp. Interacts with Rbf/Rbf1 and Rbf2. Component of the DREAM complex, which is at least composed of Myb, Caf1-55, mip40, mip120, mip130, E2f2, Dp, Rbf, Rbf2, lin-52, HDAC1/Rpd3 and l(3)mbt. In terms of tissue distribution, ubiquitously expressed in eye disk.

Its subcellular location is the nucleus. Its function is as follows. Transcriptional repressor that binds to E2f sites and represses E2f-regulated target genes. Binding to E2f sites requires transcription factor Dp. Acts synergistically with Rbf2 to antagonize E2f1-mediated transcriptional activation. Component of the DREAM complex, a multiprotein complex that can both act as a transcription activator or repressor depending on the context. The DREAM complex is required for recruiting E2f2 at differentiation-specific promoters and for stabilizing E2f2-Rbf complexes during S phase. During development, the complex represses transcription of developmentally controlled E2f target genes. During oogenesis, plays a role in restricting DNA synthesis to sites of chorion gene amplification in late stage ovarian follicle cells. Plays an inhibitory role in ionizing radiation (IR)-induced p53-independent apoptosis. May be involved in cell cycle exit by temporarily limiting CycE-dependent activation of E2f-regulated transcription. The chain is Transcription factor E2F2 (E2f2) from Drosophila melanogaster (Fruit fly).